A 661-amino-acid chain; its full sequence is MALPPEKATELKQIIHEQLTRMDVHGKIREVLAESLREEFQTESQQLSEEDLMQALRQRGIVDEVMKELHFMEDRHTRELTSTPKPATHYIDKETRSLRKTNVDPTRRYLHLQVLNGKAFLEHLQESDPLPGQACSTFTLCLHFRNQRFRSKPVPCACEPDFQDGFLLEVHKDSLGDGSKMADATTMLSICDPVQLVLLKTDTSGETTLVSSHFLEWRSILGTEKGVTSLAVELLGVGSECKVSVGVLNVKLELYPPLNKTLSQEVINTQLTLERQKTAEKERLFLVYAKQWWREYLQIRPSHNSRLVKIFAQDENWVNRPVCSYIRPLRAGRLLDTPRQAARFVNVLGYERAPTVGGGGKPEQWCTLLAFLCRNKGDCEDHCNLLCCLLLGFGLDAYVCVGTKGRGQAHTWVMTCGADGAITFWESLTGHRYVHKPINPDDPPMVEQPKPLYPYKTIGCVFSHKRFLANSQPLDAVEVCVFDLHDESRWKPMSEEAIKSVCSPGSLASLPPFPPLCSSLLDAATESNEIELQLRLLVLEHRKDLDLTTVWDDQLSYLLSPALASYEIERTTGISAGNEEFQDSIRRAVPDGHTFKGFPIHFVHRNARRAFATCLRSPFCDEIISCRGDQMRLAVRVRVYTYPEAACAVWIMFACKYRCVL.

It belongs to the CEP76 family.

Its subcellular location is the cytoplasm. The protein localises to the cytoskeleton. It is found in the microtubule organizing center. The protein resides in the centrosome. It localises to the centriole. In terms of biological role, centrosomal protein involved in regulation of centriole duplication. Required to limit centriole duplication to once per cell cycle by preventing centriole reduplication. The protein is Centrosomal protein of 76 kDa (cep76) of Xenopus laevis (African clawed frog).